The following is a 320-amino-acid chain: Fructose-1,6-bisphosphatase class 1 (320 aa).

Residues E84, D103, L105, and D106 each coordinate Mg(2+). Residues 106-109, N196, and K262 contribute to the substrate site; that span reads DGSS. E268 contributes to the Mg(2+) binding site.

It belongs to the FBPase class 1 family. As to quaternary structure, homotetramer. Requires Mg(2+) as cofactor.

It is found in the cytoplasm. The catalysed reaction is beta-D-fructose 1,6-bisphosphate + H2O = beta-D-fructose 6-phosphate + phosphate. It functions in the pathway carbohydrate biosynthesis; gluconeogenesis. This chain is Fructose-1,6-bisphosphatase class 1, found in Shewanella amazonensis (strain ATCC BAA-1098 / SB2B).